A 1311-amino-acid chain; its full sequence is Zinc finger protein 521 (1311 aa).

The segment at 47-67 adopts a C2H2-type 1; degenerate zinc-finger fold; the sequence is HSCDSCLQVFESLSDITEHKI. The segment at 81–108 is disordered; sequence DPSCSWPASSPSSKDQTSPSHGEGCDFG. Residues 83 to 102 are compositionally biased toward low complexity; the sequence is SCSWPASSPSSKDQTSPSHG. 7 consecutive C2H2-type zinc fingers follow at residues 118-140, 146-168, 174-196, 202-224, 246-269, 281-304, and 310-332; these read YPCQFCDKSFSRLSYLKHHEQSH, FKCTYCSRLFKHKRSRDRHIKLH, YHCSECDAAFSRSDHLKIHLKTH, YKCAVCRRGFLSSSSLHGHMQVH, QKCSQCEEGFDFPEDLQKHIAECH, LQCMYCHELFVEETSLMNHIEQVH, and NSCSICSESFLTVEELYSHMDSH. The tract at residues 357-398 is disordered; it reads TTPDSNLSVDSSTMVEAAPPIPKSRGRKRAAQQTSDMTGPSS. Polar residues-rich tracts occupy residues 359–370 and 387–398; these read PDSNLSVDSSTM and AQQTSDMTGPSS. The C2H2-type 9; degenerate zinc finger occupies 405–429; sequence YSCIYCNKQLFSSLAVLQIHLKTMH. C2H2-type zinc fingers lie at residues 437 to 460, 477 to 500, and 513 to 536; these read HICQYCLEVLPSLYNLNEHLKQVH, YQCNFCSEVVNDLNTLQEHIRCSH, and FFCPHCYMGFLTDSSLEEHIRQVH. Serine 546 carries the phosphoserine modification. A C2H2-type 13; atypical zinc finger spans residues 560–585; that stretch reads YSCSYCTNSPIFNSVLKLNKHIKENH. 2 positions are modified to phosphoserine: serine 605 and serine 608. C2H2-type zinc fingers lie at residues 634–656, 664–686, 694–717, 722–745, 752–775, 783–805, and 809–832; these read YICNQCGAKYTSLDSFQTHLKTH, LTCPQCNKEFPNQESLLKHVTIH, YICESCDKQFTSVDDLQKHLLDMH, FRCTLCQEVFDSKVSIQLHLAVKH, YRCTSCNWDFRNETDLQLHVKHNH, HKCIFCGESFGTEVELQCHITTH, and YNCRFCSKAFHAVILLEKHLREKH. A disordered region spans residues 863–883; the sequence is TNSQESHNSHDGSEEDVDSSE. The C2H2-type 21; degenerate zinc-finger motif lies at 886 to 908; it reads YGCDICGAAYTMETLLQNHQLRD. 3 consecutive C2H2-type zinc fingers follow at residues 930 to 952, 959 to 981, and 1020 to 1042; these read YKCNVCSRTFFSENGLREHMQTH, YMCPICGERFPSLLTLTEHKVTH, and FRCVVCMQTVTSTLELKIHGTFH. A C2H2-type 25; degenerate zinc finger spans residues 1065 to 1083; sequence YKCASCLKEFRSKQDLVKL. Residues 1105 to 1119 are compositionally biased toward low complexity; the sequence is PGLSLPPGASRPGLG. The disordered stretch occupies residues 1105 to 1136; that stretch reads PGLSLPPGASRPGLGQNESLSAMEGKGKAGGL. 5 consecutive C2H2-type zinc fingers follow at residues 1138–1161, 1195–1217, 1225–1247, 1256–1279, and 1286–1309; these read TRCSSCNVKFESESELQNHIQTVH, YQCIKCQMVFYNEWDIQVHVANH, HECKLCSQTFDSPAKLQCHLIEH, FKCPVCFTVFVQANKLQQHIFSAH, and YDCTQCPQKFFFQTELQNHTMTQH. Lysine 1146 participates in a covalent cross-link: Glycyl lysine isopeptide (Lys-Gly) (interchain with G-Cter in SUMO2).

Belongs to the krueppel C2H2-type zinc-finger protein family. Interacts with EBF1. Interacts with SMAD1 and SMAD4. Widely expressed. Expressed in all B-cell stages.

The protein resides in the nucleus. Its function is as follows. Transcription factor that can both act as an activator or a repressor depending on the context. Involved in BMP signaling and in the regulation of the immature compartment of the hematopoietic system. Associates with SMADs in response to BMP2 leading to activate transcription of BMP target genes. Acts as a transcriptional repressor via its interaction with EBF1, a transcription factor involved specification of B-cell lineage; this interaction preventing EBF1 to bind DNA and activate target genes. The sequence is that of Zinc finger protein 521 (Znf521) from Mus musculus (Mouse).